Reading from the N-terminus, the 287-residue chain is MASPDLLFNLRNLFYLGAYQAAINNSDVPGLDADAAAERDAIVFRSYVALGSYQLVISEIDSSAATSLQAVKLLALYLSGDKESAIVSLKEWLSDSAVGSNPVLRLIAGIIFMHEQDYTEALKHTHSGGTLDLHALNVQIFIKMHRSDYAEKQLKIMQQIDEDHTLTQLANAWLDIAVGGSKIREAYLIFQDFAEKYPMTGMVLNGKAVCCMHMGSFDEAETLLLEALNKDAKDPETLANLIVCNLHLGKPSSRYLSQLKLSHPDHVLVKRAVSAEDNFERALQAVA.

The protein belongs to the COPE family. As to quaternary structure, oligomeric complex that consists of at least the alpha, beta, beta', gamma, delta, epsilon and zeta subunits.

The protein localises to the cytoplasm. It localises to the golgi apparatus membrane. The protein resides in the cytoplasmic vesicle. It is found in the COPI-coated vesicle membrane. Functionally, the coatomer is a cytosolic protein complex that binds to dilysine motifs and reversibly associates with Golgi non-clathrin-coated vesicles, which further mediate biosynthetic protein transport from the ER, via the Golgi up to the trans Golgi network. The coatomer complex is required for budding from Golgi membranes, and is essential for the retrograde Golgi-to-ER transport of dilysine-tagged proteins. The protein is Coatomer subunit epsilon-1 (COPE1) of Oryza sativa subsp. japonica (Rice).